Here is a 720-residue protein sequence, read N- to C-terminus: MEDSGVNPMDSPSKGSDFGVYGIIGGGIVALLVPVLLSVVLNGTKKGKKRGVPIKVGGEEGYTMRHARAPELVDVPWEGAATMPALFEQSCKKYSKDRLLGTREFIDKEFITASDGRKFEKLHLGEYKWQSYGEVFERVCNFASGLVNVGHNVDDRVAIFSDTRAEWFIAFQGCFRQSITVVTIYASLGEEALIYSLNETRVSTLICDSKQLKKLSAIQSSLKTVKNIIYIEEDGVDVASSDVNSMGDITVSSISEVEKLGQKNAVQPILPSKNGVAVIMFTSGSTGLPKGVMITHGNLVATAAGVMKVVPKLDKNDTYIAYLPLAHVFELEAEIVVFTSGSAIGYGSAMTLTDTSNKVKKGTKGDVSALKPTIMTAVPAILDRVREGVLKKVEEKGGMAKTLFDFAYKRRLAAVDGSWFGAWGLEKMLWDALVFKKIRAVLGGHIRFMLVGGAPLSPDSQRFINICMGSPIGQGYGLTETCAGATFSEWDDPAVGRVGPPLPCGYVKLVSWEEGGYRISDKPMPRGEIVVGGNSVTAGYFNNQEKTDEVYKVDEKGTRWFYTGDIGRFHPDGCLEVIDRKKDIVKLQHGEYVSLGKVEAALGSSNYVDNIMVHADPINSYCVALVVPSRGALEKWAEEAGVKHSEFAELCEKGEAVKEVQQSLTKAGKAAKLEKFELPAKIKLLSEPWTPESGLVTAALKIKREQIKSKFKDELSKLYA.

Met1 carries the N-acetylmethionine modification. Position 279–290 (279–290 (IMFTSGSTGLPK)) interacts with ATP. The fatty acid-binding stretch occupies residues 554–582 (DEKGTRWFYTGDIGRFHPDGCLEVIDRKK).

It belongs to the ATP-dependent AMP-binding enzyme family. Mg(2+) serves as cofactor.

It catalyses the reaction a long-chain fatty acid + ATP + CoA = a long-chain fatty acyl-CoA + AMP + diphosphate. The protein operates within lipid metabolism; fatty acid metabolism. Its function is as follows. Activation of long-chain fatty acids for both synthesis of cellular lipids, and degradation via beta-oxidation. Preferentially uses palmitate, palmitoleate, oleate and linoleate. The sequence is that of Long chain acyl-CoA synthetase 8 (LACS8) from Arabidopsis thaliana (Mouse-ear cress).